Reading from the N-terminus, the 500-residue chain is Palmitoleoyl-protein carboxylesterase notum1a (500 aa).

The first 26 residues, 1 to 26 (MKRSLWVMQVLHWAVMLALVQCGALG), serve as a signal peptide directing secretion. Asn-101 is a glycosylation site (N-linked (GlcNAc...) asparagine). Catalysis depends on charge relay system residues Ser-237, Asp-344, and His-393.

This sequence belongs to the pectinacetylesterase family. Notum subfamily.

It is found in the secreted. It carries out the reaction [Wnt protein]-O-(9Z)-hexadecenoyl-L-serine + H2O = [Wnt protein]-L-serine + (9Z)-hexadecenoate + H(+). In terms of biological role, carboxylesterase that acts as a key negative regulator of the Wnt signaling pathway. Acts by specifically mediating depalmitoleoylation of WNT proteins. Serine palmitoleoylation of WNT proteins is required for efficient binding to frizzled receptors. This is Palmitoleoyl-protein carboxylesterase notum1a from Danio rerio (Zebrafish).